We begin with the raw amino-acid sequence, 189 residues long: Dual-action ribosomal maturation protein DarP (189 aa).

Residues 1–22 (MWKNGAMRGCNKETGEFLGPSR) form a disordered region.

It belongs to the DarP family.

The protein resides in the cytoplasm. In terms of biological role, member of a network of 50S ribosomal subunit biogenesis factors which assembles along the 30S-50S interface, preventing incorrect 23S rRNA structures from forming. Promotes peptidyl transferase center (PTC) maturation. The polypeptide is Dual-action ribosomal maturation protein DarP (Xylella fastidiosa (strain Temecula1 / ATCC 700964)).